A 306-amino-acid polypeptide reads, in one-letter code: UDP-N-acetylenolpyruvoylglucosamine reductase (306 aa).

The 166-residue stretch at 28–193 (KVGGPADFLA…VSAKFSLKPG (166 aa)) folds into the FAD-binding PCMH-type domain. The active site involves R172. S222 (proton donor) is an active-site residue. The active site involves E292.

The protein belongs to the MurB family. FAD is required as a cofactor.

It localises to the cytoplasm. The enzyme catalyses UDP-N-acetyl-alpha-D-muramate + NADP(+) = UDP-N-acetyl-3-O-(1-carboxyvinyl)-alpha-D-glucosamine + NADPH + H(+). It functions in the pathway cell wall biogenesis; peptidoglycan biosynthesis. Cell wall formation. In Streptococcus mutans serotype c (strain ATCC 700610 / UA159), this protein is UDP-N-acetylenolpyruvoylglucosamine reductase.